The following is a 648-amino-acid chain: Leucine aminopeptidase 2 (648 aa).

A peptide is bound by residues 143 to 145 (QCQ) and 269 to 274 (PYGGME). His-298 is a Zn(2+) binding site. Glu-299 acts as the Proton acceptor in catalysis. Zn(2+)-binding residues include His-302 and Glu-321. The active-site Proton donor is Tyr-408.

This sequence belongs to the peptidase M1 family. Requires Zn(2+) as cofactor.

It localises to the cytoplasm. The protein localises to the nucleus. It catalyses the reaction an epoxide + H2O = an ethanediol. Functionally, aminopeptidase that preferentially cleaves di- and tripeptides. Also has low epoxide hydrolase activity (in vitro). Can hydrolyze the epoxide leukotriene LTA(4) but it forms preferentially 5,6-dihydroxy-7,9,11,14-eicosatetraenoic acid rather than the cytokine leukotriene B(4) as the product compared to the homologous mammalian enzyme (in vitro). The polypeptide is Leucine aminopeptidase 2 (Lodderomyces elongisporus (strain ATCC 11503 / CBS 2605 / JCM 1781 / NBRC 1676 / NRRL YB-4239) (Yeast)).